The primary structure comprises 456 residues: Cysteine--tRNA ligase (456 aa).

Cysteine 29 serves as a coordination point for Zn(2+). The short motif at 31-41 is the 'HIGH' region element; the sequence is PTVYDYAHVGN. Residues cysteine 209, histidine 234, and glutamate 238 each contribute to the Zn(2+) site. Residues 267 to 271 carry the 'KMSKS' region motif; the sequence is KMSKS. Residue lysine 270 coordinates ATP.

Belongs to the class-I aminoacyl-tRNA synthetase family. In terms of assembly, monomer. Requires Zn(2+) as cofactor.

The protein resides in the cytoplasm. The catalysed reaction is tRNA(Cys) + L-cysteine + ATP = L-cysteinyl-tRNA(Cys) + AMP + diphosphate. This Rhodospirillum centenum (strain ATCC 51521 / SW) protein is Cysteine--tRNA ligase.